A 303-amino-acid chain; its full sequence is D-alanyl-D-alanine carboxypeptidase (303 aa).

Residues 7–23 (LLLLLFLIYLGYDYVNE) traverse the membrane as a helical segment. The segment at 37–56 (DQNPKEHLENSGTSENTQEK) is disordered. Residues 154–156 (YAL) and S161 contribute to the substrate site. 2 residues coordinate Zn(2+): H163 and D170. Catalysis depends on E213, which acts as the Proton donor/acceptor. H216 lines the Zn(2+) pocket.

Belongs to the peptidase M15B family. Zn(2+) serves as cofactor.

Its subcellular location is the cell membrane. The DD-carboxypeptidase activity is not inhibited by beta-lactam antibiotics. Cleaves the C-terminal D-alanine residue of UDP-muramyl-pentapeptide (UDP-MurNAc-L-Ala-D-Glu-mDAP-D-Ala-D-Ala) or diacetyl-L-Lys-D-Ala-D-Ala. However the physiological substrate likely contains L-Lys instead of mDAP at the third position of the pentapeptide. Also releases the C-terminal D-lactate from UDP-MurNAc-L-Ala-D-Glu-mDAP-D-Ala-D-lactate, a depsipeptide produced by the vancomycin resistance protein VanA. Therefore, VanY should contribute in vivo to the hydrolysis of both the D-alanyl-D-alanine- and the depsipeptide-containing peptidoglycan precursors. Is not necessary for vancomycin resistance of E.faecium BM4147 and perhaps not W14-9. Does not display transpeptidase or beta-lactamase activities. This chain is D-alanyl-D-alanine carboxypeptidase, found in Enterococcus faecium (Streptococcus faecium).